Reading from the N-terminus, the 1177-residue chain is uncharacterized protein (1177 aa).

The first 26 residues, 1–26 (MKKLLKKSKFWWFLLCGLSVSTILVA), serve as a signal peptide directing secretion. Residue Cys27 is the site of N-palmitoyl cysteine attachment. A lipid anchor (S-diacylglycerol cysteine) is attached at Cys27.

This sequence belongs to the MG307/MG309/MG338 family.

It is found in the cell membrane. This is an uncharacterized protein from Mycoplasma genitalium (strain ATCC 33530 / DSM 19775 / NCTC 10195 / G37) (Mycoplasmoides genitalium).